Reading from the N-terminus, the 127-residue chain is Ribonuclease P protein component 1 (127 aa).

The protein belongs to the eukaryotic/archaeal RNase P protein component 1 family. Consists of a catalytic RNA component and at least 4-5 protein subunits.

The protein localises to the cytoplasm. The enzyme catalyses Endonucleolytic cleavage of RNA, removing 5'-extranucleotides from tRNA precursor.. Functionally, part of ribonuclease P, a protein complex that generates mature tRNA molecules by cleaving their 5'-ends. The sequence is that of Ribonuclease P protein component 1 from Pyrococcus abyssi (strain GE5 / Orsay).